Consider the following 221-residue polypeptide: Small ribosomal subunit protein uS3 (221 aa).

One can recognise a KH type-2 domain in the interval 39–107 (IREYIKRKLY…QVHVNIVEVK (69 aa)).

It belongs to the universal ribosomal protein uS3 family. In terms of assembly, part of the 30S ribosomal subunit. Forms a tight complex with proteins S10 and S14.

Functionally, binds the lower part of the 30S subunit head. Binds mRNA in the 70S ribosome, positioning it for translation. The protein is Small ribosomal subunit protein uS3 of Desulforamulus reducens (strain ATCC BAA-1160 / DSM 100696 / MI-1) (Desulfotomaculum reducens).